The primary structure comprises 125 residues: Small ribosomal subunit protein uS12 (125 aa).

The disordered stretch occupies residues 1-28; sequence MPTISQLIGSERKRLTRKTKSPALKSCP. Asp-89 carries the post-translational modification 3-methylthioaspartic acid. The disordered stretch occupies residues 104 to 125; that stretch reads TAGVKDRRQSRSKYGAKAPKND.

This sequence belongs to the universal ribosomal protein uS12 family. In terms of assembly, part of the 30S ribosomal subunit. Contacts proteins S8 and S17. May interact with IF1 in the 30S initiation complex.

In terms of biological role, with S4 and S5 plays an important role in translational accuracy. Interacts with and stabilizes bases of the 16S rRNA that are involved in tRNA selection in the A site and with the mRNA backbone. Located at the interface of the 30S and 50S subunits, it traverses the body of the 30S subunit contacting proteins on the other side and probably holding the rRNA structure together. The combined cluster of proteins S8, S12 and S17 appears to hold together the shoulder and platform of the 30S subunit. This Prochlorococcus marinus subsp. pastoris (strain CCMP1986 / NIES-2087 / MED4) protein is Small ribosomal subunit protein uS12.